The following is a 331-amino-acid chain: UPF0194 membrane protein YbhG (331 aa).

The N-terminal stretch at Met-1–Ala-15 is a signal peptide. The stretch at Glu-107–Ala-208 forms a coiled coil.

Belongs to the UPF0194 family.

The protein localises to the periplasm. The polypeptide is UPF0194 membrane protein YbhG (Escherichia coli O157:H7 (strain EC4115 / EHEC)).